A 339-amino-acid polypeptide reads, in one-letter code: Erlin-2 (339 aa).

Residues methionine 1–glutamine 3 lie on the Cytoplasmic side of the membrane. A helical membrane pass occupies residues leucine 4–histidine 24. Over lysine 25–asparagine 339 the chain is Lumenal. The N-linked (GlcNAc...) asparagine glycan is linked to asparagine 106. The segment at glutamate 177–alanine 309 is interaction with ERLIN1. The residue at position 267 (lysine 267) is an N6-acetyllysine.

The protein belongs to the band 7/mec-2 family. As to quaternary structure, forms a heteromeric complex with ERLIN1. In complex with ERLIN1, interacts with RNF170. Interacts with activated ITPR1, independently of the degree of ITPR1 polyubiquitination. Interacts with SCAP, INSIG1, SREBF1 and SREBF2 under cholesterol sufficiency conditions; indicative for an association with the SCAP-SREBP-INSIG complex. Probably part of an AMFR/gp78 and INSIG1-containing ubiquitin ligase complex involved in ERAD of HMGCR. Interacts with TMUB1; TMUB1 bridges the association with AMFR. Interacts with SYVN1 and RNF139. Interacts with TMEM259. Interacts with TMEM41B. In terms of processing, deubiquitinated by USP25; leading to stabilization. As to expression, ubiquitous.

It localises to the endoplasmic reticulum membrane. Component of the ERLIN1/ERLIN2 complex which mediates the endoplasmic reticulum-associated degradation (ERAD) of inositol 1,4,5-trisphosphate receptors (IP3Rs) such as ITPR1. Promotes sterol-accelerated ERAD of HMGCR probably implicating an AMFR/gp78-containing ubiquitin ligase complex. Involved in regulation of cellular cholesterol homeostasis by regulation the SREBP signaling pathway. May promote ER retention of the SCAP-SREBF complex. The chain is Erlin-2 (ERLIN2) from Homo sapiens (Human).